A 93-amino-acid chain; its full sequence is Putative pterin-4-alpha-carbinolamine dehydratase (93 aa).

It belongs to the pterin-4-alpha-carbinolamine dehydratase family.

The catalysed reaction is (4aS,6R)-4a-hydroxy-L-erythro-5,6,7,8-tetrahydrobiopterin = (6R)-L-erythro-6,7-dihydrobiopterin + H2O. The sequence is that of Putative pterin-4-alpha-carbinolamine dehydratase from Sulfurisphaera tokodaii (strain DSM 16993 / JCM 10545 / NBRC 100140 / 7) (Sulfolobus tokodaii).